The following is a 69-amino-acid chain: Toxin CSTX-11 (69 aa).

Cystine bridges form between Cys-6–Cys-21, Cys-13–Cys-30, Cys-20–Cys-47, and Cys-32–Cys-45.

Expressed by the venom gland.

Its subcellular location is the secreted. The protein resides in the target cell membrane. Functionally, spider venom toxin that shows calcium channel blocking activity and exhibits cytolytic activity by affecting the outer leaflet curvature and/or pore formation across the membrane. It blocks L-type calcium channels (Cav1/CACNA1) in mammalian neurons at nanomolar concentrations. Furthermore, it produces a slow voltage-independent block of mid/low and high voltage-activated calcium channels in cockroach neurons. Potassium ions, histamine, M-ctenitoxin-Cs1a (AC P83619), CSTX-9 (AC P58604), and CSTX-13 (AC P83919) synergistically increase the insecticidal activity of this toxin. In vivo, it causes paralysis in blow flies and provokes death in drosophila. In Cupiennius salei (American wandering spider), this protein is Toxin CSTX-11.